The following is a 257-amino-acid chain: AN1-type zinc finger protein 2B (257 aa).

2 consecutive AN1-type zinc fingers follow at residues 4–52 (PDLG…QKDI) and 94–142 (KIFT…HPTS). 16 residues coordinate Zn(2+): C10, C15, C25, C28, C33, H36, H42, C44, C100, C105, C115, C118, C123, H126, H132, and C134. Residues 141 to 151 (TSRAGLAAISR) are VCP/p97-interacting motif (VIM). The tract at residues 153-187 (QGLASTSTVPSPSRTLPSSSSPSRATPQLPPRTTS) is disordered. Over residues 156–179 (ASTSTVPSPSRTLPSSSSPSRATP) the composition is skewed to low complexity. Residues S163, S173, and S187 each carry the phosphoserine modification. 2 consecutive UIM domains span residues 197–216 (SEDE…AKPQ) and 221–240 (QEEE…AEYQ). A Cysteine methyl ester modification is found at C254. C254 carries the S-geranylgeranyl cysteine lipid modification. The CAAX motif signature appears at 254–257 (CSLC). The propeptide at 255–257 (SLC) is removed in mature form.

In terms of assembly, binds 'Lys-48'-linked polyubiquitin chains of ubiquitinated proteins. Associates with the proteasome complex; upon exposure to arsenite. Interacts (via VIM motif) with VCP; the interaction is direct. Interacts with BAG6. Interacts with IGF1R (nascent precursor form). Interacts with DERL1, FAF2, NPLOC4 and UFD1; probably through VCP. Post-translationally, phosphorylated by MAPK14. Phosphorylation has no effect on association with the proteasome complex.

It localises to the endoplasmic reticulum membrane. Its function is as follows. Plays a role in protein homeostasis by regulating both the translocation and the ubiquitin-mediated proteasomal degradation of nascent proteins at the endoplasmic reticulum. It is involved in the regulation of signal-mediated translocation of proteins into the endoplasmic reticulum. It also plays a role in the ubiquitin-mediated proteasomal degradation of proteins for which signal-mediated translocation to the endoplasmic reticulum has failed. May therefore function in the endoplasmic reticulum stress-induced pre-emptive quality control, a mechanism that selectively attenuates the translocation of newly synthesized proteins into the endoplasmic reticulum and reroutes them to the cytosol for proteasomal degradation. By controlling the steady-state expression of the IGF1R receptor, indirectly regulates the insulin-like growth factor receptor signaling pathway. The polypeptide is AN1-type zinc finger protein 2B (Rattus norvegicus (Rat)).